Reading from the N-terminus, the 388-residue chain is Formate-dependent phosphoribosylglycinamide formyltransferase (388 aa).

N(1)-(5-phospho-beta-D-ribosyl)glycinamide is bound by residues 15–16 and Glu-75; that span reads EL. Residues Arg-107, Lys-148, 153 to 158, 188 to 191, and Glu-196 each bind ATP; these read SSGKGQ and EEFL. Residues 112 to 302 enclose the ATP-grasp domain; the sequence is DLASAELALL…EFELHLRAVL (191 aa). Residues Glu-261 and Glu-273 each contribute to the Mg(2+) site. N(1)-(5-phospho-beta-D-ribosyl)glycinamide contacts are provided by residues Asp-280, Lys-350, and 357–358; that span reads RR.

Belongs to the PurK/PurT family. As to quaternary structure, homodimer.

It carries out the reaction N(1)-(5-phospho-beta-D-ribosyl)glycinamide + formate + ATP = N(2)-formyl-N(1)-(5-phospho-beta-D-ribosyl)glycinamide + ADP + phosphate + H(+). It functions in the pathway purine metabolism; IMP biosynthesis via de novo pathway; N(2)-formyl-N(1)-(5-phospho-D-ribosyl)glycinamide from N(1)-(5-phospho-D-ribosyl)glycinamide (formate route): step 1/1. Its function is as follows. Involved in the de novo purine biosynthesis. Catalyzes the transfer of formate to 5-phospho-ribosyl-glycinamide (GAR), producing 5-phospho-ribosyl-N-formylglycinamide (FGAR). Formate is provided by PurU via hydrolysis of 10-formyl-tetrahydrofolate. The polypeptide is Formate-dependent phosphoribosylglycinamide formyltransferase (Prochlorococcus marinus (strain MIT 9313)).